The primary structure comprises 190 residues: Protein LZIC (190 aa).

The stretch at 6 to 64 forms a coiled coil; that stretch reads KSETSKLRQNMEEQLDRLMQQLQDLEECREDLEEEEYEETKKETLEQLSEFNDSLKKLM.

This sequence belongs to the CTNNBIP1 family. As to quaternary structure, does not interact with CTNNB1.

Required for neuronal survival during early development. This Danio rerio (Zebrafish) protein is Protein LZIC (lzic).